The following is a 27-amino-acid chain: rRNA/tRNA 2'-O-methyltransferase fibrillarin (27 aa).

Residues 1–12 (XFEGRGGFGGRG) show a composition bias toward gly residues. Residues 1-27 (XFEGRGGFGGRGGGDRGGRGXGGFGGG) are disordered. Residues R5, R11, R16, and R19 each carry the asymmetric dimethylarginine modification.

Belongs to the methyltransferase superfamily. Fibrillarin family. Component of box C/D small nucleolar ribonucleoprotein (snoRNP) particles. It is associated with the U3, U8 and U13 small nuclear RNAs.

The protein resides in the nucleus. It localises to the nucleolus. The enzyme catalyses L-glutaminyl-[histone H2A] + S-adenosyl-L-methionine = N(5)-methyl-L-glutaminyl-[histone H2A] + S-adenosyl-L-homocysteine + H(+). In terms of biological role, S-adenosyl-L-methionine-dependent methyltransferase that has the ability to methylate both RNAs and proteins. Involved in pre-rRNA processing. Utilizes the methyl donor S-adenosyl-L-methionine to catalyze the site-specific 2'-hydroxyl methylation of ribose moieties in pre-ribosomal RNA. Site specificity is provided by a guide RNA that base pairs with the substrate. Methylation occurs at a characteristic distance from the sequence involved in base pairing with the guide RNA. Also acts as a protein methyltransferase by mediating methylation of 'Gln-105' of histone H2A (H2AQ105me), a modification that impairs binding of the FACT complex and is specifically present at 35S ribosomal DNA locus. This chain is rRNA/tRNA 2'-O-methyltransferase fibrillarin, found in Physarum polycephalum (Slime mold).